Consider the following 373-residue polypeptide: Transaldolase (373 aa).

Lys-143 functions as the Schiff-base intermediate with substrate in the catalytic mechanism.

This sequence belongs to the transaldolase family. Type 2 subfamily.

Its subcellular location is the cytoplasm. It carries out the reaction D-sedoheptulose 7-phosphate + D-glyceraldehyde 3-phosphate = D-erythrose 4-phosphate + beta-D-fructose 6-phosphate. It participates in carbohydrate degradation; pentose phosphate pathway; D-glyceraldehyde 3-phosphate and beta-D-fructose 6-phosphate from D-ribose 5-phosphate and D-xylulose 5-phosphate (non-oxidative stage): step 2/3. Transaldolase is important for the balance of metabolites in the pentose-phosphate pathway. In Mycolicibacterium paratuberculosis (strain ATCC BAA-968 / K-10) (Mycobacterium paratuberculosis), this protein is Transaldolase.